A 443-amino-acid chain; its full sequence is UDP-N-acetylmuramate--L-alanine ligase (443 aa).

110-116 (GAHGKTS) provides a ligand contact to ATP.

It belongs to the MurCDEF family.

The protein resides in the cytoplasm. The catalysed reaction is UDP-N-acetyl-alpha-D-muramate + L-alanine + ATP = UDP-N-acetyl-alpha-D-muramoyl-L-alanine + ADP + phosphate + H(+). The protein operates within cell wall biogenesis; peptidoglycan biosynthesis. Cell wall formation. This Lactococcus lactis subsp. cremoris (strain MG1363) protein is UDP-N-acetylmuramate--L-alanine ligase.